The sequence spans 363 residues: UDP-3-O-acylglucosamine N-acyltransferase (363 aa).

Residue histidine 239 is the Proton acceptor of the active site. The interval 342–363 (LSEMKKEVEKEKESSREKEETK) is disordered.

It belongs to the transferase hexapeptide repeat family. LpxD subfamily. As to quaternary structure, homotrimer.

It carries out the reaction a UDP-3-O-[(3R)-3-hydroxyacyl]-alpha-D-glucosamine + a (3R)-hydroxyacyl-[ACP] = a UDP-2-N,3-O-bis[(3R)-3-hydroxyacyl]-alpha-D-glucosamine + holo-[ACP] + H(+). It participates in bacterial outer membrane biogenesis; LPS lipid A biosynthesis. In terms of biological role, catalyzes the N-acylation of UDP-3-O-acylglucosamine using 3-hydroxyacyl-ACP as the acyl donor. Is involved in the biosynthesis of lipid A, a phosphorylated glycolipid that anchors the lipopolysaccharide to the outer membrane of the cell. This is UDP-3-O-acylglucosamine N-acyltransferase from Syntrophus aciditrophicus (strain SB).